We begin with the raw amino-acid sequence, 91 residues long: Probable Fe(2+)-trafficking protein (91 aa).

Belongs to the Fe(2+)-trafficking protein family.

Functionally, could be a mediator in iron transactions between iron acquisition and iron-requiring processes, such as synthesis and/or repair of Fe-S clusters in biosynthetic enzymes. The chain is Probable Fe(2+)-trafficking protein from Ralstonia nicotianae (strain ATCC BAA-1114 / GMI1000) (Ralstonia solanacearum).